Consider the following 467-residue polypeptide: MLPVRESLQKQVKILIGLGNLGFGGYRGLYTRFTNPNGFLEPASSDLLLINERRNLSVIGAVSRTFSVPSVSGPAFQVCGYHIDLLLSDPCKSMASLGSKSLFVDRHSASLVSKRFTGGMVSGDGPNRGRISMRLRGKDHNEKSTICAYFAYRGAKRWIYLNQQRRGMGFRGLHSSLSNRLSAGNAPDVSLDNSVTDEQVRDSSDSVAAKLCTKPLKLVSGSCYLPHPDKEATGGEDAHFICAEEQALGVADGVGGWAELGIDAGYYSRELMSNSVNAIQDEPKGSIDPARVLEKAHTCTKSQGSSTACIIALTNQGLHAINLGDSGFMVVREGHTVFRSPVQQHDFNFTYQLESGRNGDLPSSGQVFTVAVAPGDVIIAGTDGLFDNLYNNEITAIVVHAVRANIDPQVTAQKIAALARQRAQDKNRQTPFSTAAQDAGFRYYGGKLDDITVVVSYVAASKEEGKH.

One can recognise a PPM-type phosphatase domain in the interval 222-458 (SCYLPHPDKE…DDITVVVSYV (237 aa)). Residues aspartate 252, glycine 253, aspartate 383, and aspartate 449 each contribute to the Mn(2+) site.

It belongs to the PP2C family. Requires Mg(2+) as cofactor. Mn(2+) serves as cofactor.

It catalyses the reaction O-phospho-L-seryl-[protein] + H2O = L-seryl-[protein] + phosphate. The catalysed reaction is O-phospho-L-threonyl-[protein] + H2O = L-threonyl-[protein] + phosphate. This Arabidopsis thaliana (Mouse-ear cress) protein is Probable protein phosphatase 2C 55.